The chain runs to 1202 residues: Liprin-alpha-1 (1202 aa).

The tract at residues 1-33 (MMCEVMPTISEAEGPPGGGGGHGSGSPSQPDAD) is disordered. A compositionally biased stretch (gly residues) spans 15–24 (PPGGGGGHGS). Positions 34–141 (SHFEQLMVSM…VSRHERSLRM (108 aa)) form a coiled coil. S150 carries the phosphoserine modification. Residues 176 to 214 (EKVRERLRVALERCSLLEEELGATHKELMILKEQNNQKK) adopt a coiled-coil conformation. 2 disordered regions span residues 224–245 (NHEQENTPSTSGKRSSDGSLSH) and 426–446 (KNQELQRARQREKMNEEHNKR). T230 carries the post-translational modification Phosphothreonine. Phosphoserine occurs at positions 239, 242, and 244. Coiled coils occupy residues 249–521 (LAKV…GASL) and 623–669 (ADAH…SGSL). S448 carries the post-translational modification Phosphoserine. The segment covering 651–662 (ENTEQRAEEIES) has biased composition (basic and acidic residues). The disordered stretch occupies residues 651 to 855 (ENTEQRAEEI…SKLGGQAEKN (205 aa)). Residues S666, S668, and S693 each carry the phosphoserine modification. Residues 686 to 700 (ASSLASSSPPGSGRS) show a composition bias toward low complexity. The span at 725 to 736 (SREEVRDDKTTI) shows a compositional bias: basic and acidic residues. The residue at position 761 (T761) is a Phosphothreonine. Over residues 762-771 (VSHEDIRDIR) the composition is skewed to basic and acidic residues. S763 is modified (phosphoserine). Polar residues predominate over residues 832-841 (VSETDNSSQD). Residues 847 to 871 (KLGGQAEKNRKLQKKHELLEEARRQ) are a coiled coil. SAM domains follow at residues 878–944 (WDGP…IMSL), 963–1027 (NHEW…LRRL), and 1051–1120 (WSND…LLVM). A coiled-coil region spans residues 1021–1050 (IMCLRRLNYDRKELERKREESQSEIKDVLV). S1133 carries the post-translational modification Phosphoserine. At T1159 the chain carries Phosphothreonine. A disordered region spans residues 1163-1202 (NFRVTSSMSSPSMQPKKMQMDGNVSGTQRLDSATVRTYSC). A compositionally biased stretch (low complexity) spans 1168 to 1179 (SSMSSPSMQPKK). Polar residues predominate over residues 1184 to 1202 (GNVSGTQRLDSATVRTYSC).

The protein belongs to the liprin family. Liprin-alpha subfamily. In terms of assembly, homodimer. Interacts with PTPRF (via D2 domain). Part of a cortical microtubule stabilization complex (CMSC) composed of KANK1, PPFIA1, PPFIBP1, ERC1/ELKS, PHLDB2/LL5beta, CLASPs, KIF21A and possibly additional interactors; within CMSCs KANK1 and PHLDB2/LL5beta seem to be the core components for recruiting microtubule-binding proteins KIF21A and CLASPs, whereas PPFIA1, PPFIBP1 and ERC1/ELKS serve as scaffolds for protein clustering. In terms of tissue distribution, ubiquitous.

It is found in the cytoplasm. The protein localises to the cell cortex. Functionally, may regulate the disassembly of focal adhesions. May localize receptor-like tyrosine phosphatases type 2A at specific sites on the plasma membrane, possibly regulating their interaction with the extracellular environment and their association with substrates. The protein is Liprin-alpha-1 (PPFIA1) of Homo sapiens (Human).